The chain runs to 331 residues: MARMYYDSDANLDILNDKTIAIIGYGSQGHAHALNLKDSGSKVIVGLYSGSKSATKAKDAGLDVYPVDEAAEKADLIMILLPDEVQKTVYKNQIEPHLKEGKILAFAHGFNIHFGQIIPPENVDVVMVAPKGPGHLVRRTYEQGEGVPCLFAIFQDASGQGRDRAMAYAKGIGGTRAGILETTFREETETDLFGEQVVLCGGLSALIKAGFETLVKAGYQPELAYFECLHEVKLIVDLVVEGGLANMRDSISNTAEFGDYTRGPRIVTDETRAQMQKILSEIQSGQFAREFVMENQTGKPVFTAMRRQEAEHSIEEVGKDLRAMFSWLKKR.

In terms of domain architecture, KARI N-terminal Rossmann spans A2 to T182. NADP(+) is bound by residues Y25–Q28, S51, S53, and D83–Q86. The active site involves H108. G134 provides a ligand contact to NADP(+). The 146-residue stretch at T183–L328 folds into the KARI C-terminal knotted domain. Positions 191, 195, 227, and 231 each coordinate Mg(2+). S252 lines the substrate pocket.

The protein belongs to the ketol-acid reductoisomerase family. Mg(2+) is required as a cofactor.

It catalyses the reaction (2R)-2,3-dihydroxy-3-methylbutanoate + NADP(+) = (2S)-2-acetolactate + NADPH + H(+). The enzyme catalyses (2R,3R)-2,3-dihydroxy-3-methylpentanoate + NADP(+) = (S)-2-ethyl-2-hydroxy-3-oxobutanoate + NADPH + H(+). It participates in amino-acid biosynthesis; L-isoleucine biosynthesis; L-isoleucine from 2-oxobutanoate: step 2/4. The protein operates within amino-acid biosynthesis; L-valine biosynthesis; L-valine from pyruvate: step 2/4. Involved in the biosynthesis of branched-chain amino acids (BCAA). Catalyzes an alkyl-migration followed by a ketol-acid reduction of (S)-2-acetolactate (S2AL) to yield (R)-2,3-dihydroxy-isovalerate. In the isomerase reaction, S2AL is rearranged via a Mg-dependent methyl migration to produce 3-hydroxy-3-methyl-2-ketobutyrate (HMKB). In the reductase reaction, this 2-ketoacid undergoes a metal-dependent reduction by NADPH to yield (R)-2,3-dihydroxy-isovalerate. This chain is Ketol-acid reductoisomerase (NADP(+)), found in Trichodesmium erythraeum (strain IMS101).